The primary structure comprises 490 residues: 23S rRNA (uracil(1939)-C(5))-methyltransferase RlmD (490 aa).

Residues 14 to 75 form the TRAM domain; the sequence is APAPAEYPID…SSFEKATLTA (62 aa). Positions 88, 98, 101, and 180 each coordinate [4Fe-4S] cluster. S-adenosyl-L-methionine is bound by residues Gln289, Phe318, Asn323, Glu339, Asn374, and Asp395. The active-site Nucleophile is Cys446.

It belongs to the class I-like SAM-binding methyltransferase superfamily. RNA M5U methyltransferase family. RlmD subfamily.

It carries out the reaction uridine(1939) in 23S rRNA + S-adenosyl-L-methionine = 5-methyluridine(1939) in 23S rRNA + S-adenosyl-L-homocysteine + H(+). Catalyzes the formation of 5-methyl-uridine at position 1939 (m5U1939) in 23S rRNA. This is 23S rRNA (uracil(1939)-C(5))-methyltransferase RlmD from Polaromonas naphthalenivorans (strain CJ2).